The sequence spans 452 residues: Phosphoglucosamine mutase (452 aa).

Serine 112 functions as the Phosphoserine intermediate in the catalytic mechanism. Mg(2+) contacts are provided by serine 112, aspartate 251, aspartate 253, and aspartate 255. Serine 112 bears the Phosphoserine mark.

This sequence belongs to the phosphohexose mutase family. Requires Mg(2+) as cofactor. Post-translationally, activated by phosphorylation.

The enzyme catalyses alpha-D-glucosamine 1-phosphate = D-glucosamine 6-phosphate. Its function is as follows. Catalyzes the conversion of glucosamine-6-phosphate to glucosamine-1-phosphate. This chain is Phosphoglucosamine mutase, found in Bordetella bronchiseptica (strain ATCC BAA-588 / NCTC 13252 / RB50) (Alcaligenes bronchisepticus).